The sequence spans 396 residues: NAD(P)H oxidoreductase RTN4IP1, mitochondrial (396 aa).

A mitochondrion-targeting transit peptide spans 1–40; that stretch reads MGFLKTCVFRRNACTAVCFWRSQVVQKPSVRKISTTSPRS. An Enoyl reductase (ER) domain is found at 52–393; that stretch reads GSNEVLRFTQ…RGHARGKTVI (342 aa). Positions 214, 216, 217, 237, 255, 276, 300, 341, 343, 386, 387, and 388 each coordinate NADPH.

Belongs to the zinc-containing alcohol dehydrogenase family. Quinone oxidoreductase subfamily. As to quaternary structure, interacts with RTN4, UQCRC1 and UQCRC2.

It is found in the mitochondrion matrix. The protein resides in the mitochondrion outer membrane. The enzyme catalyses a 3-demethylubiquinone + NADH + 2 H(+) = a 3-demethylubiquinol + NAD(+). The catalysed reaction is a 3-demethylubiquinone + NADPH + 2 H(+) = a 3-demethylubiquinol + NADP(+). It catalyses the reaction 3-demethylubiquinone-10 + NADH + 2 H(+) = 3-demethylubiquinol-10 + NAD(+). It carries out the reaction 3-demethylubiquinone-10 + NADPH + 2 H(+) = 3-demethylubiquinol-10 + NADP(+). It participates in cofactor biosynthesis; ubiquinone biosynthesis. Its function is as follows. NAD(P)H oxidoreductase involved in the ubiquinone biosynthetic pathway. Required for the O-methyltransferase activity of COQ3. Able to catalyze the oxidoreduction of 3-demethylubiquinone into 3-demethylubiquinol in vitro. However, it is unclear if 3-demethylubiquinone constitutes a substrate in vivo. May also play a role in the regulation of retinal ganglion cell (RGC) neurite outgrowth, and hence in the development of the inner retina and optic nerve. Appears to be a potent inhibitor of regeneration following spinal cord injury. The protein is NAD(P)H oxidoreductase RTN4IP1, mitochondrial (RTN4IP1) of Bos taurus (Bovine).